A 645-amino-acid polypeptide reads, in one-letter code: Transcription termination factor FttA (645 aa).

The KHa stretch occupies residues 10–77 (APSNQNIMAT…IIVRIDESVR (68 aa)). Positions 78-146 (KKEEDARKML…WTLRIRKATT (69 aa)) are KHb. The segment at 187 to 391 (EISLTALGGF…LLIESTYGAK (205 aa)) is metallo-beta-lactamase N-terminus. Residues His-250, His-252, Asp-254, His-255, His-337, and Asp-360 each contribute to the Zn(2+) site. Positions 392 to 586 (EDIQPTRQEV…CRMEKLDGFS (195 aa)) are beta-Casp. The interval 587-645 (GHSDYNQLTGFVQKLRPKLRRVLVNHGERRKSENLALAVRRMFRIPAHYPQIQESIKLF) is metallo-beta-lactamase C-terminus. Residue His-612 participates in Zn(2+) binding.

The protein belongs to the metallo-beta-lactamase superfamily. RNA-metabolizing metallo-beta-lactamase-like family. FttA subfamily. In terms of assembly, homodimer. Interacts with RNA polymerase (RNAP), interacts with the Spt4-Spt5 complex. Zn(2+) serves as cofactor.

In terms of biological role, terminates transcription on the whole genome. Termination is linked to FttA-mediated RNA cleavage and does not require NTP hydrolysis. Cleaves endonucleolytically at the RNA exit channel of RNA polymerase (RNAP); the 5'-3' exonuclease activity of this protein degrades the nascent RNA released from RNAP. Terminates transcription genome-wide in M.maripaludis. Restores wild-type growth to a strain of Methanococcus maripaludis depleted for this gene at 22 degrees Celsius and prevents transcriptional read-through. Transcription termination is most effective in vivo on RNAs with more than one U4-tract in their 3'-ends. Has endonuclease activity after U-rich tracts in transcription termination sequences. This Cenarchaeum symbiosum (strain A) protein is Transcription termination factor FttA.